A 188-amino-acid polypeptide reads, in one-letter code: MMHPVASSNPAFCGPGKPSCLNEDAMRAADQFDIYSSQQNKYSHTVSHKPMVCQRQDPLNETHLQTAGGRSIEIKDELKKKKNLNRSGKRGRPSGTTKSAGYRTSTGRPLGTTKAAGFKTSPGRPLGTTKAAGYKVSPGRPPGSIKALSRLADLGYGCGTAAFPYPMIHGRAVHGVEETSSEIKPPNE.

Position 37 is a phosphoserine (serine 37). Residue lysine 75 forms a Glycyl lysine isopeptide (Lys-Gly) (interchain with G-Cter in SUMO2) linkage. Positions 79 to 142 (KKKKNLNRSG…GYKVSPGRPP (64 aa)) are disordered. Residues 80–92 (KKKNLNRSGKRGR) show a composition bias toward basic residues. Over residues 94-107 (SGTTKSAGYRTSTG) the composition is skewed to polar residues. Residues serine 121 and serine 180 each carry the phosphoserine modification. Residue lysine 184 forms a Glycyl lysine isopeptide (Lys-Gly) (interchain with G-Cter in SUMO2) linkage.

It belongs to the UPF0461 family.

The protein is UPF0461 protein C5orf24 homolog of Bos taurus (Bovine).